The following is a 276-amino-acid chain: Pantothenate synthetase (276 aa).

M27–H34 lines the ATP pocket. Catalysis depends on H34, which acts as the Proton donor. (R)-pantoate is bound at residue Q58. Residue Q58 coordinates beta-alanine. G145–D148 is a binding site for ATP. Q151 provides a ligand contact to (R)-pantoate. ATP is bound by residues I174 and L182–R185.

It belongs to the pantothenate synthetase family. As to quaternary structure, homodimer.

The protein localises to the cytoplasm. It carries out the reaction (R)-pantoate + beta-alanine + ATP = (R)-pantothenate + AMP + diphosphate + H(+). It functions in the pathway cofactor biosynthesis; (R)-pantothenate biosynthesis; (R)-pantothenate from (R)-pantoate and beta-alanine: step 1/1. Functionally, catalyzes the condensation of pantoate with beta-alanine in an ATP-dependent reaction via a pantoyl-adenylate intermediate. In Aromatoleum aromaticum (strain DSM 19018 / LMG 30748 / EbN1) (Azoarcus sp. (strain EbN1)), this protein is Pantothenate synthetase.